The following is a 1592-amino-acid chain: Serine/threonine-protein kinase mrck-1 (1592 aa).

An involved in homo-dimerization region spans residues methionine 1–methionine 954. A Protein kinase domain is found at phenylalanine 83 to phenylalanine 351. ATP contacts are provided by residues isoleucine 89–valine 97 and lysine 112. The Proton acceptor role is filled by aspartate 207. The AGC-kinase C-terminal domain maps to glutamate 352–arginine 426. At serine 415 the chain carries Phosphoserine. At tyrosine 416 the chain carries Phosphotyrosine. 2 coiled-coil regions span residues glutamate 444–serine 782 and leucine 811–serine 871. Over residues serine 782–glycine 796 the composition is skewed to polar residues. The segment at serine 782–arginine 801 is disordered. The segment at glutamate 955–serine 1534 is involved in binding to membranes, with a preference for di-phosphorylated phosphoinositides (PIPs). The segment at glycine 957–cysteine 1007 adopts a Phorbol-ester/DAG-type zinc-finger fold. Histidine 958, cysteine 971, cysteine 974, cysteine 988, cysteine 991, histidine 996, cysteine 999, and cysteine 1007 together coordinate Zn(2+). In terms of domain architecture, PH spans glycine 1026–threonine 1154. The region spanning isoleucine 1181–serine 1479 is the CNH domain. One can recognise a CRIB domain in the interval isoleucine 1544–glycine 1557. Positions isoleucine 1544–glycine 1557 are involved in interaction with cdc-42 (GTP-bound). Deletion prevents rescue of a null mutant; furthermore deleted form of mrck-1 is no longer recruited to the cell cortex and instead appears to be completely cytoplasmic.

Belongs to the protein kinase superfamily. AGC Ser/Thr protein kinase family. DMPK subfamily. Homodimer, via N-terminal domains. Interacts (via the CRIB domain) with cdc-42 (GTP-bound), but with a lower affinity for cdc-42 bound to GDP; the interaction is direct and may play a role in the recruitment of mrck-1 to the apical membrane. The cofactor is Mg(2+). In terms of tissue distribution, expressed in embryonic and L4 larval seam cells and in embryonic dorsal and ventral epidermal cells. Also expressed in the pharynx throughout development and in sublateral nerve cords in the L4 larva.

It is found in the cytoplasm. Its subcellular location is the cell cortex. The enzyme catalyses L-seryl-[protein] + ATP = O-phospho-L-seryl-[protein] + ADP + H(+). The catalysed reaction is L-threonyl-[protein] + ATP = O-phospho-L-threonyl-[protein] + ADP + H(+). Functionally, serine/threonine-protein kinase. Involved in regulating endoderm precursor cell movements during early gastrulation; activates apical myosin and thereby increases actomyosin contractility and tension in the apical cell cortex, probably as a result of recruitment of mrck-1 to the cortex by a combination of interaction with active cdc-42 and membrane binding. May phosphorylate and inactivate the phosphatase mel-11, and thereby contribute to the regulation of myosin II contractility during embryonic elongation. Involved in controlling canal length and Golgi/ER integrity during excretory canal elongation. This chain is Serine/threonine-protein kinase mrck-1, found in Caenorhabditis elegans.